A 240-amino-acid chain; its full sequence is Biotin--[acetyl-CoA-carboxylase] ligase (240 aa).

Residues 1 to 176 (MLARTDSTNA…AFARWQAQLD (176 aa)) enclose the BPL/LPL catalytic domain. Residues 7–9 (STN), Gln30, 34–36 (RGR), and Lys102 contribute to the biotin site.

Belongs to the biotin--protein ligase family.

The catalysed reaction is biotin + L-lysyl-[protein] + ATP = N(6)-biotinyl-L-lysyl-[protein] + AMP + diphosphate + H(+). Its function is as follows. Activates biotin to form biotinyl-5'-adenylate and transfers the biotin moiety to biotin-accepting proteins. The sequence is that of Biotin--[acetyl-CoA-carboxylase] ligase (birA) from Paracoccus denitrificans.